Reading from the N-terminus, the 134-residue chain is Loki profilin-2 (134 aa).

Positions L55 to I62 are loki loop.

Belongs to the Asgard profilin family.

The protein resides in the cytoplasm. The protein localises to the cytoskeleton. Its activity is regulated as follows. Inhibition of rabbit actin polymerization is reduced by phosphatidylinositol-(4,5)-P2(1,2-dipalmitoyl), a soluble form of the phospholipid phosphatidylinositol, suggesting an unknown lipid might regulate actin-profilin interaction in vivo. In terms of biological role, binds to actin and affects the structure of the cytoskeleton. At high concentrations inhibits spontaneous rabbit actin nucleation. This strongly suggests this archaea has a profilin-regulated actin system, and actin-type genes can be identified in this organism. The sequence is that of Loki profilin-2 from Lokiarchaeum sp. (strain GC14_75).